A 51-amino-acid chain; its full sequence is MRIQSTVNGGFAEVSDEYAQRLIAAGGWKRPRKPRTTKPKPAPKQEPATEE.

A disordered region spans residues 24-51 (AAGGWKRPRKPRTTKPKPAPKQEPATEE). Positions 29–38 (KRPRKPRTTK) are enriched in basic residues.

This chain is Gene 18 protein (18), found in Mycobacterium phage D29 (Mycobacteriophage D29).